The primary structure comprises 962 residues: Protease 3 (962 aa).

A signal peptide spans 1–23; sequence MPRSTWFKALLLLVALWAPLSQA. Zn(2+) is bound at residue H88. E91 functions as the Proton acceptor in the catalytic mechanism. Zn(2+)-binding residues include H92 and E169.

The protein belongs to the peptidase M16 family. Monomer. Zn(2+) serves as cofactor.

It localises to the periplasm. It carries out the reaction Preferential cleavage of 16-Tyr-|-Leu-17 and 25-Phe-|-Tyr-26 bonds of oxidized insulin B chain. Also acts on other substrates of Mw less than 7 kDa such as insulin and glucagon.. Endopeptidase that degrades small peptides of less than 7 kDa, such as glucagon and insulin. This Escherichia coli (strain K12) protein is Protease 3 (ptrA).